Consider the following 839-residue polypeptide: MTRLDVEKTIEELTLGEKVALTAGIDFWHTASVPRLNIPTLRMSDGPNGVRGTRFFNGVPAACFPCATALGATWDTELLHECGRLMGEESIAKGSHIILGPTINTQRSPLGGRGFESFAEDGVLSGNLAGYMSKGIQEKGVAATLKHFVCNDQEHERLAVDSIVTMRAMREIYLMPFQLAMRICPTACVMTAYNKVNGTHVSENKQIITDILRKEWGWDGLVMSDWFGTYSTSEAINAGLDLEMPGKTRWRSTPLAHAVSSNKVAEFVMDERVRNVLNLVNFVEPLGIPENCPEKALNRPQDQALLRRAAAESIVLMKNDDNILPLKKDKPILVIGPNAKIAAYCGGGSASLDPYYTVTPFEGVSAKSTGAVTFSQGVYSHKQLPELGPLMKSADGKKGFSFRVYKEPVSAPSRELVDELHLVSSSGFLMDYVHPKIDSLTFYVDMEGYFTPEEDGVYDFGVTVVGTGKLLIDGETVVDNTKNQRPGSAFFGTATVEEQGSKELKAGQTYKVVLEFGTAPTSDLDTRGVVVFGPGGFRFGASRRVSQEELIAKAADAAAQAEQVVIFAGLTSEWETEGHDRDHMDLPPGSDEMIQRVLAANPNTAVVIQSGTPVTMPWAAQTKALVQAWFGGNECGNGIADVLYGDVNPAGKLPLSFPVRLQDNPSYLNFRSERGRVLYGEDVYVGYRYYEKVNLAPLFPFGHGLSYTTFERSDLTLATVPEKPQYETAGEPITASVTVTNTGPVAGAEVVQLWVRPPPTGVNRPVRELKGFAKVMLNPGEQKRVDIVVEKKLATSWWDEQREMWASEKGQYEVQVTGTGADVLTSSFAVEKTRFWLGL.

N197 is a glycosylation site (N-linked (GlcNAc...) asparagine). The active site involves D225. Residues 395–555 (DGKKGFSFRV…SQEELIAKAA (161 aa)) form the PA14 domain.

It belongs to the glycosyl hydrolase 3 family.

It localises to the secreted. It catalyses the reaction Hydrolysis of terminal, non-reducing beta-D-glucosyl residues with release of beta-D-glucose.. It participates in glycan metabolism; cellulose degradation. Functionally, beta-glucosidases are one of a number of cellulolytic enzymes involved in the degradation of cellulosic biomass. Catalyzes the last step releasing glucose from the inhibitory cellobiose. The sequence is that of Probable beta-glucosidase I (bglI) from Aspergillus terreus (strain NIH 2624 / FGSC A1156).